We begin with the raw amino-acid sequence, 161 residues long: Cytochrome c-type biogenesis protein CcmE (161 aa).

Residues 1–8 (MNARRKKR) lie on the Cytoplasmic side of the membrane. Residues 9-29 (LALATALIGGVAAIASLLLYA) form a helical; Signal-anchor for type II membrane protein membrane-spanning segment. At 30 to 161 (LNSNLNLFYT…DYNAEQKSGY (132 aa)) the chain is on the periplasmic side. Heme-binding residues include His131 and Tyr135.

Belongs to the CcmE/CycJ family.

The protein localises to the cell inner membrane. Its function is as follows. Heme chaperone required for the biogenesis of c-type cytochromes. Transiently binds heme delivered by CcmC and transfers the heme to apo-cytochromes in a process facilitated by CcmF and CcmH. The chain is Cytochrome c-type biogenesis protein CcmE from Shewanella woodyi (strain ATCC 51908 / MS32).